We begin with the raw amino-acid sequence, 816 residues long: Endo-acting ulvan lyase (816 aa).

The first 23 residues, 1-23 (MGTSVRRISVVLMMLFGTNFCWS), serve as a signal peptide directing secretion.

Belongs to the polysaccharide lyase family.

The protein localises to the cell surface. It localises to the periplasm. In terms of biological role, ulvan lyase involved in ulvan degradation. Ulvan is the main polysaccharide component of the Ulvales (green seaweed) cell wall. It is composed of disaccharide building blocks comprising 3-sulfated rhamnose (Rha3S) linked to D-glucuronic acid (GlcA), L-iduronic acid (IduA), or D-xylose (Xyl). Ulvan lyase catalyzes the endolytic cleavage of the glycosidic bond between Rha3S and the uronic acids GlcA or IduA, producing oligosaccharides that have unsaturated 4-deoxy-L-threo-hex-4-enopyranosiduronic acid (deltaUA) at the non-reducing end. This results eventually in the degradation of the ulvan polysaccharide into deltaUA-Rha3S disaccharides and deltaUA-Rha3S-Xyl-Rha3S tetrasaccharides. This chain is Endo-acting ulvan lyase, found in Formosa agariphila (strain DSM 15362 / KCTC 12365 / LMG 23005 / KMM 3901 / M-2Alg 35-1).